Reading from the N-terminus, the 141-residue chain is Lutropin subunit beta (141 aa).

The N-terminal stretch at 1–20 (MEMLQGLLLLLLLSMGGAWA) is a signal peptide. Intrachain disulfides connect Cys29–Cys77, Cys43–Cys92, Cys46–Cys130, Cys54–Cys108, Cys58–Cys110, and Cys113–Cys120. Residues Asn33 and Asn50 are each glycosylated (N-linked (GlcNAc...) asparagine).

Belongs to the glycoprotein hormones subunit beta family. In terms of assembly, heterodimer of a common alpha chain and a unique beta chain which confers biological specificity to thyrotropin, lutropin, follitropin and gonadotropin.

It is found in the secreted. In terms of biological role, promotes spermatogenesis and ovulation by stimulating the testes and ovaries to synthesize steroids. In Gorilla gorilla gorilla (Western lowland gorilla), this protein is Lutropin subunit beta (LHB).